We begin with the raw amino-acid sequence, 408 residues long: Arginine biosynthesis bifunctional protein ArgJ (408 aa).

Residues Thr-158, Lys-184, Thr-195, Glu-281, Asn-403, and Thr-408 each coordinate substrate. The active-site Nucleophile is Thr-195.

It belongs to the ArgJ family. In terms of assembly, heterotetramer of two alpha and two beta chains.

It is found in the cytoplasm. The enzyme catalyses N(2)-acetyl-L-ornithine + L-glutamate = N-acetyl-L-glutamate + L-ornithine. It catalyses the reaction L-glutamate + acetyl-CoA = N-acetyl-L-glutamate + CoA + H(+). The protein operates within amino-acid biosynthesis; L-arginine biosynthesis; L-ornithine and N-acetyl-L-glutamate from L-glutamate and N(2)-acetyl-L-ornithine (cyclic): step 1/1. It participates in amino-acid biosynthesis; L-arginine biosynthesis; N(2)-acetyl-L-ornithine from L-glutamate: step 1/4. Its function is as follows. Catalyzes two activities which are involved in the cyclic version of arginine biosynthesis: the synthesis of N-acetylglutamate from glutamate and acetyl-CoA as the acetyl donor, and of ornithine by transacetylation between N(2)-acetylornithine and glutamate. This is Arginine biosynthesis bifunctional protein ArgJ from Bacillus cereus (strain ATCC 14579 / DSM 31 / CCUG 7414 / JCM 2152 / NBRC 15305 / NCIMB 9373 / NCTC 2599 / NRRL B-3711).